Consider the following 299-residue polypeptide: GTPase Era (299 aa).

In terms of domain architecture, Era-type G spans 5 to 172 (KSGFVSIIGR…IDVLKSFLPE (168 aa)). The tract at residues 13-20 (GRPNVGKS) is G1. A GTP-binding site is contributed by 13–20 (GRPNVGKS). The G2 stretch occupies residues 39–43 (QTTRN). A G3 region spans residues 60–63 (DTPG). GTP is bound by residues 60-64 (DTPGI) and 122-125 (NKID). Residues 122-125 (NKID) are G4. Residues 151 to 153 (ISA) form a G5 region. Positions 203–280 (TSEEIPHAIG…YLELWVKVQR (78 aa)) constitute a KH type-2 domain.

It belongs to the TRAFAC class TrmE-Era-EngA-EngB-Septin-like GTPase superfamily. Era GTPase family. In terms of assembly, monomer.

Its subcellular location is the cytoplasm. It is found in the cell membrane. In terms of biological role, an essential GTPase that binds both GDP and GTP, with rapid nucleotide exchange. Plays a role in 16S rRNA processing and 30S ribosomal subunit biogenesis and possibly also in cell cycle regulation and energy metabolism. The sequence is that of GTPase Era from Staphylococcus epidermidis (strain ATCC 35984 / DSM 28319 / BCRC 17069 / CCUG 31568 / BM 3577 / RP62A).